The primary structure comprises 660 residues: Pentatricopeptide repeat-containing protein At4g20090 (660 aa).

PPR repeat units lie at residues 76–110, 111–141, 147–181, 186–220, 221–255, 256–290, 291–325, 326–360, 361–395, 396–430, 431–465, 466–500, 501–535, 539–573, and 574–609; these read GDST…NRVI, IERS…MVDE, SVKS…NMNM, NGLS…KCLP, DGYT…GCSP, SPVI…GCVP, NEVT…KCIP, NDVT…GYHL, NQHI…GCKP, NIVV…GCLP, NAYT…GCSR, NKFC…GIKP, DTVA…EEPK, DVVT…GCDP, and DVIT…LLKR.

The protein belongs to the PPR family. P subfamily.

Its function is as follows. May play a role in embryogenesis. The protein is Pentatricopeptide repeat-containing protein At4g20090 (EMB1025) of Arabidopsis thaliana (Mouse-ear cress).